Here is a 33-residue protein sequence, read N- to C-terminus: GDCLPHLKLCKENKDCCSKKCKRRGTNIEKRCR.

Disulfide bonds link cysteine 3–cysteine 17, cysteine 10–cysteine 21, and cysteine 16–cysteine 32. The segment at 22–24 (KRR) is essential for stimulation of [3H]ryanodine binding to RYR.

The protein belongs to the scorpion calcin family. In terms of processing, the non-natural D-maurocalcin (a chiral analog of maurocalcin composed of D-amino acids) completely loses the ability to stimulate [3H]ryanodine binding and calcium release. Its protease resistance, combined with its efficient cell penetration at concentrations devoid of cell toxicity, suggests that it should be an excellent vector for in vivo applications. Expressed by the venom gland.

It is found in the secreted. In terms of biological role, this toxin stabilizes ryanodine receptor 1 (RyR1) opening in a long-lasting subconductance state (48%-60% of the full conductance state). Furthermore, it triggers calcium release from sarcoplasmic vesicles (6.6 nM are enough to induce a sharp release, and 60% of the total calcium is released after toxin (100 nM) addition) probably by acting as a cell-penetrating peptide (CPP). In addition, it has been shown to dose-dependently stimulate ryanodine binding to RyR1 (EC(50)=12.5-26.4 nM). It also augments the bell-shaped calcium-[3H]ryanodine binding curve that is maximal at about 10 uM calcium concentration. It binds a different site as ryanodine. It acts synergistically with caffeine. In vivo, intracerebroventricular injection into mice causes death. The sequence is that of Maurocalcin from Scorpio palmatus (Israeli golden scorpion).